The sequence spans 442 residues: Ankyrin repeat and MYND domain-containing protein 2 (442 aa).

ANK repeat units lie at residues 45 to 74 (NGMT…DVNC), 79 to 108 (HGYT…ETDV), and 159 to 188 (KLAG…NPLL). C320, C323, C332, C335, C341, C345, H353, and C357 together coordinate Zn(2+). The segment at 320 to 357 (CTTCGEKGASKRCSVCKMVIYCDQTCQKTHWFAHKKIC) adopts an MYND-type zinc-finger fold. A compositionally biased stretch (basic and acidic residues) spans 401 to 421 (TRICQKNDNPKDSEEGEKESL). Positions 401–442 (TRICQKNDNPKDSEEGEKESLQSDAGLEGLQEAAVGPQVSEE) are disordered.

As to quaternary structure, interacts with the retinal-specific guanylyl cyclase GC1.

The protein resides in the cell projection. The protein localises to the cilium. Functionally, may be involved in the trafficking of signaling proteins to the cilia. This chain is Ankyrin repeat and MYND domain-containing protein 2 (ANKMY2), found in Bos taurus (Bovine).